The chain runs to 352 residues: 26S proteasome regulatory subunit rpn-8 (352 aa).

The region spanning 16-152 (VSVAPLVLLS…TDAYFAVDEI (137 aa)) is the MPN domain. Residues 303–352 (NRQQQEENDAKKKEGENGEKKEGADKKEGSPAAANGESKEKENSPKEKKK) form a disordered region. Composition is skewed to basic and acidic residues over residues 306-331 (QQEE…KKEG) and 339-352 (ESKE…EKKK).

This sequence belongs to the peptidase M67A family.

Acts as a regulatory subunit of the 26S proteasome which is involved in the ATP-dependent degradation of ubiquitinated proteins. The protein is 26S proteasome regulatory subunit rpn-8 (rpn-8) of Neurospora crassa (strain ATCC 24698 / 74-OR23-1A / CBS 708.71 / DSM 1257 / FGSC 987).